We begin with the raw amino-acid sequence, 443 residues long: Probable glycine dehydrogenase (decarboxylating) subunit 1 (443 aa).

Belongs to the GcvP family. N-terminal subunit subfamily. As to quaternary structure, the glycine cleavage system is composed of four proteins: P, T, L and H. In this organism, the P 'protein' is a heterodimer of two subunits.

It catalyses the reaction N(6)-[(R)-lipoyl]-L-lysyl-[glycine-cleavage complex H protein] + glycine + H(+) = N(6)-[(R)-S(8)-aminomethyldihydrolipoyl]-L-lysyl-[glycine-cleavage complex H protein] + CO2. Its function is as follows. The glycine cleavage system catalyzes the degradation of glycine. The P protein binds the alpha-amino group of glycine through its pyridoxal phosphate cofactor; CO(2) is released and the remaining methylamine moiety is then transferred to the lipoamide cofactor of the H protein. The chain is Probable glycine dehydrogenase (decarboxylating) subunit 1 from Chloroherpeton thalassium (strain ATCC 35110 / GB-78).